A 482-amino-acid polypeptide reads, in one-letter code: Cysteine--tRNA ligase (482 aa).

Cysteine 29 is a Zn(2+) binding site. The 'HIGH' region signature appears at 31–41; sequence PTVYDFAHIGN. 3 residues coordinate Zn(2+): cysteine 224, histidine 249, and glutamate 253. A 'KMSKS' region motif is present at residues 282-286; the sequence is KMSKS. Lysine 285 contributes to the ATP binding site.

It belongs to the class-I aminoacyl-tRNA synthetase family. In terms of assembly, monomer. The cofactor is Zn(2+).

It localises to the cytoplasm. It catalyses the reaction tRNA(Cys) + L-cysteine + ATP = L-cysteinyl-tRNA(Cys) + AMP + diphosphate. The chain is Cysteine--tRNA ligase from Nitrobacter hamburgensis (strain DSM 10229 / NCIMB 13809 / X14).